The chain runs to 868 residues: Receptor-like protein kinase At5g59670 (868 aa).

The first 22 residues, 1–22 (MESSFGLLLALLTLTIIHIVQA), serve as a signal peptide directing secretion. At 23–500 (QDPQGFISLD…PRLIKPPKKE (478 aa)) the chain is on the extracellular side. N-linked (GlcNAc...) asparagine glycans are attached at residues Asn-38, Asn-94, Asn-141, Asn-287, Asn-300, Asn-372, Asn-405, Asn-416, Asn-423, Asn-445, Asn-464, and Asn-471. LRR repeat units lie at residues 409–432 (PPRI…AIQS), 433–459 (ITQL…KMKS), and 461–481 (SVIN…LRKK). Residues 501–521 (FPVAIVTLVVFVTVIVVLFLV) form a helical membrane-spanning segment. The Cytoplasmic segment spans residues 522–868 (FRKKMSTIVK…LDTTAVPMAR (347 aa)). Thr-555 is subject to Phosphothreonine. The region spanning 564–834 (KNFQRVLGKG…SMSQVIHELK (271 aa)) is the Protein kinase domain. ATP-binding positions include 570-578 (LGKGGFGMV) and Lys-592. Tyr-637 is modified (phosphotyrosine). Asp-689 serves as the catalytic Proton acceptor. Ser-723 carries the post-translational modification Phosphoserine. Thr-724 and Thr-729 each carry phosphothreonine.

Belongs to the protein kinase superfamily. Ser/Thr protein kinase family. Post-translationally, autophosphorylated on Tyr and Thr residues.

It localises to the cell membrane. It carries out the reaction L-seryl-[protein] + ATP = O-phospho-L-seryl-[protein] + ADP + H(+). The enzyme catalyses L-threonyl-[protein] + ATP = O-phospho-L-threonyl-[protein] + ADP + H(+). The catalysed reaction is L-tyrosyl-[protein] + ATP = O-phospho-L-tyrosyl-[protein] + ADP + H(+). In terms of biological role, probable receptor with a dual specificity kinase activity acting on both serine/threonine- and tyrosine-containing substrates. This Arabidopsis thaliana (Mouse-ear cress) protein is Receptor-like protein kinase At5g59670.